Reading from the N-terminus, the 236-residue chain is Ribonuclease 3 (236 aa).

In terms of domain architecture, RNase III spans 8 to 130 (FRRLSQALDY…TFAAVSFDAD (123 aa)). Glu43 contributes to the Mg(2+) binding site. Asp47 is a catalytic residue. 2 residues coordinate Mg(2+): Asp116 and Glu119. Residue Glu119 is part of the active site. The DRBM domain occupies 157–227 (DAKTRLQEAL…AEAALTLLEQ (71 aa)).

This sequence belongs to the ribonuclease III family. In terms of assembly, homodimer. Mg(2+) is required as a cofactor.

It localises to the cytoplasm. The catalysed reaction is Endonucleolytic cleavage to 5'-phosphomonoester.. Its function is as follows. Digests double-stranded RNA. Involved in the processing of primary rRNA transcript to yield the immediate precursors to the large and small rRNAs (23S and 16S). Processes some mRNAs, and tRNAs when they are encoded in the rRNA operon. Processes pre-crRNA and tracrRNA of type II CRISPR loci if present in the organism. This is Ribonuclease 3 from Chromobacterium violaceum (strain ATCC 12472 / DSM 30191 / JCM 1249 / CCUG 213 / NBRC 12614 / NCIMB 9131 / NCTC 9757 / MK).